The sequence spans 339 residues: Serpentine receptor class alpha-22 (339 aa).

A run of 6 helical transmembrane segments spans residues 33–53 (IFIS…IQAL), 110–130 (VVDL…VFSL), 150–170 (FIAI…FYIA), 199–219 (VRTM…YLSV), 250–270 (IFII…NLLL), and 284–304 (IALF…VIYF).

It belongs to the nematode receptor-like protein sra family.

Its subcellular location is the membrane. The sequence is that of Serpentine receptor class alpha-22 (sra-22) from Caenorhabditis elegans.